The sequence spans 95 residues: Large ribosomal subunit protein uL23 (95 aa).

The protein belongs to the universal ribosomal protein uL23 family. Part of the 50S ribosomal subunit. Contacts protein L29, and trigger factor when it is bound to the ribosome.

In terms of biological role, one of the early assembly proteins it binds 23S rRNA. One of the proteins that surrounds the polypeptide exit tunnel on the outside of the ribosome. Forms the main docking site for trigger factor binding to the ribosome. The protein is Large ribosomal subunit protein uL23 of Geobacillus kaustophilus (strain HTA426).